Consider the following 453-residue polypeptide: UPF0210 protein Pcar_2119 (453 aa).

Belongs to the UPF0210 family. Homodimer.

This is UPF0210 protein Pcar_2119 from Syntrophotalea carbinolica (strain DSM 2380 / NBRC 103641 / GraBd1) (Pelobacter carbinolicus).